We begin with the raw amino-acid sequence, 250 residues long: Peroxiredoxin (250 aa).

Residues 6-163 (PLIGERFPEM…ILRIVKALKL (158 aa)) enclose the Thioredoxin domain. Cys50 (cysteine sulfenic acid (-SOH) intermediate) is an active-site residue. Arg126 lines the substrate pocket. Cys207 and Cys213 are oxidised to a cystine.

Belongs to the peroxiredoxin family. Prx6 subfamily. In terms of assembly, homodecamer. Pentamer of dimers that assemble into a ring structure.

Its subcellular location is the cytoplasm. It catalyses the reaction a hydroperoxide + [thioredoxin]-dithiol = an alcohol + [thioredoxin]-disulfide + H2O. Its function is as follows. Thiol-specific peroxidase that catalyzes the reduction of hydrogen peroxide and organic hydroperoxides to water and alcohols, respectively. Plays a role in cell protection against oxidative stress by detoxifying peroxides. In Aeropyrum pernix (strain ATCC 700893 / DSM 11879 / JCM 9820 / NBRC 100138 / K1), this protein is Peroxiredoxin.